A 384-amino-acid chain; its full sequence is Succinyl-diaminopimelate desuccinylase (384 aa).

Residue H71 coordinates Zn(2+). Residue D73 is part of the active site. D104 is a Zn(2+) binding site. E139 serves as the catalytic Proton acceptor. The Zn(2+) site is built by E140, E168, and H357.

Belongs to the peptidase M20A family. DapE subfamily. Homodimer. It depends on Zn(2+) as a cofactor. Co(2+) serves as cofactor.

It catalyses the reaction N-succinyl-(2S,6S)-2,6-diaminopimelate + H2O = (2S,6S)-2,6-diaminopimelate + succinate. Its pathway is amino-acid biosynthesis; L-lysine biosynthesis via DAP pathway; LL-2,6-diaminopimelate from (S)-tetrahydrodipicolinate (succinylase route): step 3/3. Catalyzes the hydrolysis of N-succinyl-L,L-diaminopimelic acid (SDAP), forming succinate and LL-2,6-diaminopimelate (DAP), an intermediate involved in the bacterial biosynthesis of lysine and meso-diaminopimelic acid, an essential component of bacterial cell walls. In Bradyrhizobium sp. (strain BTAi1 / ATCC BAA-1182), this protein is Succinyl-diaminopimelate desuccinylase.